We begin with the raw amino-acid sequence, 365 residues long: S-adenosylmethionine:tRNA ribosyltransferase-isomerase (365 aa).

It belongs to the QueA family. Monomer.

The protein localises to the cytoplasm. It carries out the reaction 7-aminomethyl-7-carbaguanosine(34) in tRNA + S-adenosyl-L-methionine = epoxyqueuosine(34) in tRNA + adenine + L-methionine + 2 H(+). It participates in tRNA modification; tRNA-queuosine biosynthesis. Its function is as follows. Transfers and isomerizes the ribose moiety from AdoMet to the 7-aminomethyl group of 7-deazaguanine (preQ1-tRNA) to give epoxyqueuosine (oQ-tRNA). This Rickettsia africae (strain ESF-5) protein is S-adenosylmethionine:tRNA ribosyltransferase-isomerase.